We begin with the raw amino-acid sequence, 336 residues long: Holliday junction branch migration complex subunit RuvB (336 aa).

Residues Met-1–Tyr-181 are large ATPase domain (RuvB-L). ATP contacts are provided by residues Leu-20, Arg-21, Gly-62, Lys-65, Thr-66, Thr-67, Glu-128–Phe-130, Arg-171, Tyr-181, and Arg-218. Residue Thr-66 coordinates Mg(2+). The interval Lys-182–Gly-252 is small ATPAse domain (RuvB-S). The segment at Glu-255–Lys-336 is head domain (RuvB-H). Residues Arg-309 and Arg-314 each coordinate DNA.

The protein belongs to the RuvB family. Homohexamer. Forms an RuvA(8)-RuvB(12)-Holliday junction (HJ) complex. HJ DNA is sandwiched between 2 RuvA tetramers; dsDNA enters through RuvA and exits via RuvB. An RuvB hexamer assembles on each DNA strand where it exits the tetramer. Each RuvB hexamer is contacted by two RuvA subunits (via domain III) on 2 adjacent RuvB subunits; this complex drives branch migration. In the full resolvosome a probable DNA-RuvA(4)-RuvB(12)-RuvC(2) complex forms which resolves the HJ.

The protein localises to the cytoplasm. The catalysed reaction is ATP + H2O = ADP + phosphate + H(+). Its function is as follows. The RuvA-RuvB-RuvC complex processes Holliday junction (HJ) DNA during genetic recombination and DNA repair, while the RuvA-RuvB complex plays an important role in the rescue of blocked DNA replication forks via replication fork reversal (RFR). RuvA specifically binds to HJ cruciform DNA, conferring on it an open structure. The RuvB hexamer acts as an ATP-dependent pump, pulling dsDNA into and through the RuvAB complex. RuvB forms 2 homohexamers on either side of HJ DNA bound by 1 or 2 RuvA tetramers; 4 subunits per hexamer contact DNA at a time. Coordinated motions by a converter formed by DNA-disengaged RuvB subunits stimulates ATP hydrolysis and nucleotide exchange. Immobilization of the converter enables RuvB to convert the ATP-contained energy into a lever motion, pulling 2 nucleotides of DNA out of the RuvA tetramer per ATP hydrolyzed, thus driving DNA branch migration. The RuvB motors rotate together with the DNA substrate, which together with the progressing nucleotide cycle form the mechanistic basis for DNA recombination by continuous HJ branch migration. Branch migration allows RuvC to scan DNA until it finds its consensus sequence, where it cleaves and resolves cruciform DNA. This chain is Holliday junction branch migration complex subunit RuvB, found in Campylobacter lari (strain RM2100 / D67 / ATCC BAA-1060).